The sequence spans 200 residues: dITP/XTP pyrophosphatase (200 aa).

Residue 8–13 (TGNQGK) coordinates substrate. The active-site Proton acceptor is the Asp-69. Asp-69 contacts Mg(2+). Substrate is bound by residues Ser-70, 154-157 (FGYD), Lys-177, and 182-183 (HR).

The protein belongs to the HAM1 NTPase family. In terms of assembly, homodimer. The cofactor is Mg(2+).

The enzyme catalyses XTP + H2O = XMP + diphosphate + H(+). The catalysed reaction is dITP + H2O = dIMP + diphosphate + H(+). It catalyses the reaction ITP + H2O = IMP + diphosphate + H(+). Pyrophosphatase that catalyzes the hydrolysis of nucleoside triphosphates to their monophosphate derivatives, with a high preference for the non-canonical purine nucleotides XTP (xanthosine triphosphate), dITP (deoxyinosine triphosphate) and ITP. Seems to function as a house-cleaning enzyme that removes non-canonical purine nucleotides from the nucleotide pool, thus preventing their incorporation into DNA/RNA and avoiding chromosomal lesions. The chain is dITP/XTP pyrophosphatase from Vibrio cholerae serotype O1 (strain ATCC 39315 / El Tor Inaba N16961).